Here is a 583-residue protein sequence, read N- to C-terminus: Probable lysosomal cobalamin transporter (583 aa).

Transmembrane regions (helical) follow at residues 8–28 (LIWA…SVFI), 41–61 (VILT…LVPV), 95–115 (IVYY…IPFI), 145–165 (TVSF…VPVA), 188–208 (ALTF…VLYT), 312–332 (LLSG…MLLT), 347–367 (GYIL…VQSA), 375–395 (VIFT…ISAV), 418–438 (LLAT…TSMI), and 506–526 (FFGA…LLVM). Residues 541–552 (LDEDAEEAEEES) show a composition bias toward acidic residues. The tract at residues 541–562 (LDEDAEEAEEESLLANTRGRAE) is disordered.

The protein belongs to the LIMR family. LMBRD1 subfamily.

Its subcellular location is the lysosome membrane. Probable lysosomal cobalamin transporter. Required to export cobalamin from lysosomes allowing its conversion to cofactors. This is Probable lysosomal cobalamin transporter from Aspergillus oryzae (strain ATCC 42149 / RIB 40) (Yellow koji mold).